Consider the following 230-residue polypeptide: Small ribosomal subunit protein uS3 (230 aa).

The region spanning valine 39–arginine 107 is the KH type-2 domain.

It belongs to the universal ribosomal protein uS3 family. Part of the 30S ribosomal subunit. Forms a tight complex with proteins S10 and S14.

Functionally, binds the lower part of the 30S subunit head. Binds mRNA in the 70S ribosome, positioning it for translation. In Shewanella oneidensis (strain ATCC 700550 / JCM 31522 / CIP 106686 / LMG 19005 / NCIMB 14063 / MR-1), this protein is Small ribosomal subunit protein uS3.